The sequence spans 279 residues: S-methyl-5'-thioadenosine phosphorylase (279 aa).

Phosphate contacts are provided by residues S13, 55–56 (RH), and 88–89 (TA). Position 191 (M191) interacts with substrate. Position 192 (T192) interacts with phosphate. Residue 215–217 (DYD) coordinates substrate.

This sequence belongs to the PNP/MTAP phosphorylase family. MTAP subfamily. Homotrimer.

It localises to the cytoplasm. The protein localises to the nucleus. It carries out the reaction S-methyl-5'-thioadenosine + phosphate = 5-(methylsulfanyl)-alpha-D-ribose 1-phosphate + adenine. It functions in the pathway amino-acid biosynthesis; L-methionine biosynthesis via salvage pathway; S-methyl-5-thio-alpha-D-ribose 1-phosphate from S-methyl-5'-thioadenosine (phosphorylase route): step 1/1. In terms of biological role, catalyzes the reversible phosphorylation of S-methyl-5'-thioadenosine (MTA) to adenine and 5-methylthioribose-1-phosphate. Involved in the breakdown of MTA, a major by-product of polyamine biosynthesis. Responsible for the first step in the methionine salvage pathway after MTA has been generated from S-adenosylmethionine. Has broad substrate specificity with 6-aminopurine nucleosides as preferred substrates. This chain is S-methyl-5'-thioadenosine phosphorylase, found in Aedes aegypti (Yellowfever mosquito).